A 317-amino-acid chain; its full sequence is MGEEHPRKRSRQHFEAEARNVSLFESPQCETSKWYFSREEIERFSPSRKDGIDLVKESFLRSSYCTFLQRLGMKLHVSQVTISCAMVMCHRFYMRQSHAKNDWQTIATSSLFLACKAEDEPCQLSSVVVASYEIIYEWDPSASIRIHQTECYHEFKEIILSGESLLLSTSAFHLDIELPYKPLAAALNRLNAWPDLATAAWNFVHDWIRTTLCLQYKPHVIATATVHLAATFQNAKVGSRRDWWLEFGVTTKLLKEVIQEMCTLIEVDRRRNMPPPPPPPRRELSWAIPAAVKPVHMARAYPFHSYPLQSYRQAGIW.

The protein belongs to the cyclin family. Cyclin T subfamily. In terms of assembly, interacts with CDKC-1 and CDKC-2. As to expression, abundantly expressed in flowers. Expressed in roots, seedlings, rosettes and stems.

This is Cyclin-T1-3 (CYCT1-3) from Arabidopsis thaliana (Mouse-ear cress).